Reading from the N-terminus, the 446-residue chain is Glutamine synthetase (446 aa).

In terms of domain architecture, GS beta-grasp spans Arg15–Gly102. The region spanning Ser109–Leu446 is the GS catalytic domain. Positions 132 and 134 each coordinate Mg(2+). An ATP-binding site is contributed by Glu184. Mg(2+) is bound by residues Glu189 and Glu196. Gly241 contributes to the L-glutamate binding site. A Mg(2+)-binding site is contributed by His245. ATP is bound by residues His247–Ser249 and Ser249. L-glutamate contacts are provided by Arg298, Glu304, and Arg316. ATP is bound by residues Arg316 and Arg321. Glu336 serves as a coordination point for Mg(2+). Arg338 contributes to the L-glutamate binding site. An Isoglutamyl lysine isopeptide (Lys-Gln) (interchain with Q-Cter in protein Pup) cross-link involves residue Lys363.

It belongs to the glutamine synthetase family. As to quaternary structure, oligomer of 12 subunits arranged in the form of two hexagons. In its feedback-inhibited form, interacts with TnrA in order to block its DNA-binding activity. Requires Mg(2+) as cofactor.

The protein resides in the cytoplasm. It catalyses the reaction L-glutamate + NH4(+) + ATP = L-glutamine + ADP + phosphate + H(+). With respect to regulation, inhibited by glutamine. In terms of biological role, glutamine synthetase (GS) is an unusual multitasking protein that functions as an enzyme, a transcription coregulator, and a chaperone in ammonium assimilation and in the regulation of genes involved in nitrogen metabolism. It catalyzes the ATP-dependent biosynthesis of glutamine from glutamate and ammonia. Feedback-inhibited GlnA also interacts with and regulates the activity of the transcriptional regulator TnrA. During nitrogen limitation, TnrA is in its DNA-binding active state and turns on the transcription of genes required for nitrogen assimilation. Under conditions of nitrogen excess, feedback-inhibited GlnA forms a stable complex with TnrA, which inhibits its DNA-binding activity. In contrast, feedback-inhibited GlnA acts as a chaperone to stabilize the DNA-binding activity of GlnR, which represses the transcription of nitrogen assimilation genes. This chain is Glutamine synthetase, found in Mycolicibacterium smegmatis (strain ATCC 700084 / mc(2)155) (Mycobacterium smegmatis).